Here is a 407-residue protein sequence, read N- to C-terminus: Tryptophan synthase beta chain (407 aa).

K98 bears the N6-(pyridoxal phosphate)lysine mark.

Belongs to the TrpB family. In terms of assembly, tetramer of two alpha and two beta chains. It depends on pyridoxal 5'-phosphate as a cofactor.

It catalyses the reaction (1S,2R)-1-C-(indol-3-yl)glycerol 3-phosphate + L-serine = D-glyceraldehyde 3-phosphate + L-tryptophan + H2O. It participates in amino-acid biosynthesis; L-tryptophan biosynthesis; L-tryptophan from chorismate: step 5/5. Its function is as follows. The beta subunit is responsible for the synthesis of L-tryptophan from indole and L-serine. The polypeptide is Tryptophan synthase beta chain (Bradyrhizobium sp. (strain BTAi1 / ATCC BAA-1182)).